A 257-amino-acid chain; its full sequence is MKNILLTNDDGFEAKGLLELAKKLGKIANVVIAAPSTEKSGSSQSLTLTRPLRFIKIDENFYKLDDATPADCVYLGLHALFKTKPDLIVSGINHGANIAEDITCSGTCGAAMQGALQGIPSLAVSQFFTGKSLKNSGFDLACDIAYKVVCKIFENGFPLLNKQFLNLNIPSVCKKDFKGLKIAPAGRKFYDTNAQNGINPRGKKYYWLGKMDIKFDISENQNTDIGLLSEGFATLTPIKPDMTAYEQINGLEKWLKI.

Positions 9, 10, 40, and 93 each coordinate a divalent metal cation.

Belongs to the SurE nucleotidase family. Requires a divalent metal cation as cofactor.

It is found in the cytoplasm. It carries out the reaction a ribonucleoside 5'-phosphate + H2O = a ribonucleoside + phosphate. Nucleotidase that shows phosphatase activity on nucleoside 5'-monophosphates. The chain is 5'-nucleotidase SurE from Campylobacter hominis (strain ATCC BAA-381 / DSM 21671 / CCUG 45161 / LMG 19568 / NCTC 13146 / CH001A).